Here is a 92-residue protein sequence, read N- to C-terminus: uncharacterized protein (92 aa).

Residues 1–29 (MAAQTDYKKQVVGILLSLAFVLFVFSFSE) form the signal peptide.

This is an uncharacterized protein from Bacillus subtilis (strain 168).